Here is a 906-residue protein sequence, read N- to C-terminus: Catenin alpha-1 (906 aa).

An N-acetylthreonine modification is found at T2. The interval 2-228 (TAVHAGNINF…PILYTASQAC (227 aa)) is involved in homodimerization. Residue K57 forms a Glycyl lysine isopeptide (Lys-Gly) (interchain with G-Cter in SUMO2) linkage. An interaction with JUP and CTNNB1 region spans residues 97-148 (VRKQGDLMKSAAGEFADDPCSSVKRGNMVRAARALLSAVTRLLILADMADVY). Phosphoserine occurs at positions 264, 295, and 297. The tract at residues 325–394 (TRDDRRERIV…AVMDHVSDSF (70 aa)) is interaction with alpha-actinin. Residue T634 is modified to Phosphothreonine. A Phosphoserine modification is found at S641. Position 645 is a phosphothreonine (T645). A phosphoserine mark is found at S652 and S655. T658 carries the post-translational modification Phosphothreonine. A Glycyl lysine isopeptide (Lys-Gly) (interchain with G-Cter in SUMO2) cross-link involves residue K797. S851 is modified (phosphoserine). A compositionally biased stretch (basic and acidic residues) spans 864 to 880 (PEKKPLVKREKQDETQT). The interval 864-894 (PEKKPLVKREKQDETQTKIKRASQKKHVNPV) is disordered. Residues 881-891 (KIKRASQKKHV) are compositionally biased toward basic residues.

The protein belongs to the vinculin/alpha-catenin family. As to quaternary structure, monomer and homodimer; the monomer preferentially binds to CTNNB1 and the homodimer to actin. Component of an cadherin:catenin adhesion complex composed of at least of CDH26, beta-catenin/CTNNB1, alpha-catenin/CTNNA1 and p120 catenin/CTNND1. Possible component of an E-cadherin/ catenin adhesion complex together with E-cadherin/CDH1 and beta-catenin/CTNNB1 or gamma-catenin/JUP; the complex is located to adherens junctions. The stable association of CTNNA1 is controversial as CTNNA1 was shown not to bind to F-actin when assembled in the complex. Alternatively, the CTNNA1-containing complex may be linked to F-actin by other proteins such as LIMA1. Binds AFDN and F-actin. Interacts with LIMA1. Interacts with ARHGAP21. Interacts with AJUBA. Interacts with vinculin/VCL. Interacts with TJP2/ZO2 (via N-terminus). Interacts with TJP1/ZO1 (via N-terminus). Sumoylated. In terms of processing, phosphorylation seems to contribute to the strength of cell-cell adhesion rather than to the basic capacity for cell-cell adhesion. As to expression, expressed in cerebellum, heart, liver, small intestine, kidney and placenta (at protein level).

The protein localises to the cytoplasm. It localises to the cytoskeleton. The protein resides in the cell junction. It is found in the adherens junction. Its subcellular location is the cell membrane. The protein localises to the nucleus. Associates with the cytoplasmic domain of a variety of cadherins. The association of catenins to cadherins produces a complex which is linked to the actin filament network, and which seems to be of primary importance for cadherins cell-adhesion properties. Can associate with both E- and N-cadherins. Originally believed to be a stable component of E-cadherin/catenin adhesion complexes and to mediate the linkage of cadherins to the actin cytoskeleton at adherens junctions. In contrast, cortical actin was found to be much more dynamic than E-cadherin/catenin complexes and CTNNA1 was shown not to bind to F-actin when assembled in the complex suggesting a different linkage between actin and adherens junctions components. The homodimeric form may regulate actin filament assembly and inhibit actin branching by competing with the Arp2/3 complex for binding to actin filaments. Involved in the regulation of WWTR1/TAZ, YAP1 and TGFB1-dependent SMAD2 and SMAD3 nuclear accumulation. May play a crucial role in cell differentiation. The chain is Catenin alpha-1 from Mus musculus (Mouse).